Here is an 801-residue protein sequence, read N- to C-terminus: tRNA(Met) cytidine acetyltransferase TmcA (801 aa).

ATP-binding positions include glutamine 228, 256-265, and arginine 412; that span reads GRGKSSAVGL. The N-acetyltransferase domain maps to 457–637; the sequence is EELFLKNEEE…YTVIVVKPLS (181 aa). Acetyl-CoA is bound by residues 562–564, 569–575, and glutamate 602; these read IAT and MGKGLGS.

This sequence belongs to the RNA cytidine acetyltransferase family. TmcA subfamily.

Its subcellular location is the cytoplasm. The enzyme catalyses cytidine(34) in elongator tRNA(Met) + acetyl-CoA + ATP + H2O = N(4)-acetylcytidine(34) in elongator tRNA(Met) + ADP + phosphate + CoA + H(+). Functionally, catalyzes the formation of N(4)-acetylcytidine (ac(4)C) at the wobble position of tRNA(Met), by using acetyl-CoA as an acetyl donor and ATP (or GTP). The polypeptide is tRNA(Met) cytidine acetyltransferase TmcA (Thermofilum pendens (strain DSM 2475 / Hrk 5)).